The chain runs to 383 residues: Acetylornithine deacetylase (383 aa).

His-80 lines the Zn(2+) pocket. Residue Asp-82 is part of the active site. Asp-112 is a binding site for Zn(2+). Glu-144 is a catalytic residue. Residues Glu-145, Glu-169, and His-355 each coordinate Zn(2+).

The protein belongs to the peptidase M20A family. ArgE subfamily. Homodimer. It depends on Zn(2+) as a cofactor. Co(2+) is required as a cofactor. The cofactor is glutathione.

The protein resides in the cytoplasm. The enzyme catalyses N(2)-acetyl-L-ornithine + H2O = L-ornithine + acetate. Its pathway is amino-acid biosynthesis; L-arginine biosynthesis; L-ornithine from N(2)-acetyl-L-ornithine (linear): step 1/1. Catalyzes the hydrolysis of the amide bond of N(2)-acetylated L-amino acids. Cleaves the acetyl group from N-acetyl-L-ornithine to form L-ornithine, an intermediate in L-arginine biosynthesis pathway, and a branchpoint in the synthesis of polyamines. In Shigella flexneri, this protein is Acetylornithine deacetylase.